Here is a 95-residue protein sequence, read N- to C-terminus: Acylphosphatase (95 aa).

Positions 7 to 94 (AALVRITGRV…EAPAGFRITR (88 aa)) constitute an Acylphosphatase-like domain. Catalysis depends on residues R22 and N40. Positions 76–88 (VASEEASSAEAPA) are enriched in low complexity. The segment at 76-95 (VASEEASSAEAPAGFRITRG) is disordered.

It belongs to the acylphosphatase family.

The enzyme catalyses an acyl phosphate + H2O = a carboxylate + phosphate + H(+). This chain is Acylphosphatase (acyP), found in Rhizobium meliloti (strain 1021) (Ensifer meliloti).